A 248-amino-acid chain; its full sequence is Adenosylcobinamide-GDP ribazoletransferase (248 aa).

Helical transmembrane passes span 24-44 (EINL…IGAW), 70-90 (IIIT…GLFS), 106-126 (VGAN…ALFL), 134-154 (IGWL…LLFA), 168-188 (IFLG…LVAL), 189-209 (GAFF…FTII), and 228-248 (AGGQ…WGLI).

The protein belongs to the CobS family. The cofactor is Mg(2+).

Its subcellular location is the cell membrane. The enzyme catalyses alpha-ribazole + adenosylcob(III)inamide-GDP = adenosylcob(III)alamin + GMP + H(+). It carries out the reaction alpha-ribazole 5'-phosphate + adenosylcob(III)inamide-GDP = adenosylcob(III)alamin 5'-phosphate + GMP + H(+). Its pathway is cofactor biosynthesis; adenosylcobalamin biosynthesis; adenosylcobalamin from cob(II)yrinate a,c-diamide: step 7/7. In terms of biological role, joins adenosylcobinamide-GDP and alpha-ribazole to generate adenosylcobalamin (Ado-cobalamin). Also synthesizes adenosylcobalamin 5'-phosphate from adenosylcobinamide-GDP and alpha-ribazole 5'-phosphate. This chain is Adenosylcobinamide-GDP ribazoletransferase, found in Listeria monocytogenes serotype 4a (strain HCC23).